The chain runs to 231 residues: 7-cyano-7-deazaguanine synthase (231 aa).

8 to 18 (FSGGQDSTTCL) serves as a coordination point for ATP. Positions 188, 197, 200, and 203 each coordinate Zn(2+).

This sequence belongs to the QueC family. It depends on Zn(2+) as a cofactor.

The catalysed reaction is 7-carboxy-7-deazaguanine + NH4(+) + ATP = 7-cyano-7-deazaguanine + ADP + phosphate + H2O + H(+). It functions in the pathway purine metabolism; 7-cyano-7-deazaguanine biosynthesis. Its function is as follows. Catalyzes the ATP-dependent conversion of 7-carboxy-7-deazaguanine (CDG) to 7-cyano-7-deazaguanine (preQ(0)). This is 7-cyano-7-deazaguanine synthase from Erwinia tasmaniensis (strain DSM 17950 / CFBP 7177 / CIP 109463 / NCPPB 4357 / Et1/99).